Consider the following 447-residue polypeptide: MLNSILVILCLIAVSAFFSMSEISLAASRKIKLKLLADEGNINAQRVLNMQENPGMFFTVVQIGLNAVAILGGIVGDAAFSPAFHSLFSRYMSAELSEQLSFILSFSLVTGMFILFADLTPKRIGMIAPEAVALRIINPMRFCLYVCTPLVWFFNGLANIIFRIFKLPMVRKDDITSDDIYAVVEAGALAGVLRKQEHELIENVFELESRTVPSSMTPRENVIWFDLHEDEQSLKNKVAEHPHSKFLVCNEDIDHIIGYVDSKDLLNRVLANQSLALNSGVQIRNTLIVPDTLTLSEALESFKTAGEDFAVIMNEYALVVGIITLNDVMTTLMGDLVGQGLEEQIVARDENSWLIDGGTPIDDVMRVLDIDEFPQSGNYETIGGFMMFMLRKIPKRTDSVKFAGYKFEVVDIDNYRIDQLLVTRIDSKATALSPKLPDAKDKEESVA.

The Cytoplasmic portion of the chain corresponds to 1 to 4 (MLNS). The region spanning 1–197 (MLNSILVILC…ALAGVLRKQE (197 aa)) is the CNNM transmembrane domain. The chain crosses the membrane as a helical span at residues 5–25 (ILVILCLIAVSAFFSMSEISL). At 26 to 54 (AASRKIKLKLLADEGNINAQRVLNMQENP) the chain is on the periplasmic side. Residues 55–75 (GMFFTVVQIGLNAVAILGGIV) form a helical membrane-spanning segment. At 76–99 (GDAAFSPAFHSLFSRYMSAELSEQ) the chain is on the cytoplasmic side. Residues 100-120 (LSFILSFSLVTGMFILFADLT) traverse the membrane as a helical segment. Over 121 to 141 (PKRIGMIAPEAVALRIINPMR) the chain is Periplasmic. A helical membrane pass occupies residues 142–162 (FCLYVCTPLVWFFNGLANIIF). At 163–447 (RIFKLPMVRK…DAKDKEESVA (285 aa)) the chain is on the cytoplasmic side. CBS domains are found at residues 216-275 (MTPR…NQSL) and 282-343 (QIRN…GLEE).

The protein belongs to the UPF0053 family. PaeA subfamily.

The protein resides in the cell inner membrane. Functionally, involved in cadaverine and putrescine tolerance in stationary phase. May facilitate the efflux of both cadaverine and putrescine from the cytoplasm, reducing potentially toxic levels under certain stress conditions. This chain is Polyamine export protein, found in Escherichia coli O157:H7.